A 503-amino-acid polypeptide reads, in one-letter code: Glutamate--tRNA ligase (503 aa).

The 'HIGH' region signature appears at 26–36 (PSPTGTPHVGL). The segment at 126 to 148 (TPEEVEARHRAAGRDPKLGYDNA) is disordered. Over residues 130–148 (VEARHRAAGRDPKLGYDNA) the composition is skewed to basic and acidic residues. Positions 270–274 (KLSKR) match the 'KMSKS' region motif. Position 273 (Lys273) interacts with ATP.

Belongs to the class-I aminoacyl-tRNA synthetase family. Glutamate--tRNA ligase type 1 subfamily. As to quaternary structure, monomer.

The protein resides in the cytoplasm. It carries out the reaction tRNA(Glu) + L-glutamate + ATP = L-glutamyl-tRNA(Glu) + AMP + diphosphate. In terms of biological role, catalyzes the attachment of glutamate to tRNA(Glu) in a two-step reaction: glutamate is first activated by ATP to form Glu-AMP and then transferred to the acceptor end of tRNA(Glu). This Saccharopolyspora erythraea (strain ATCC 11635 / DSM 40517 / JCM 4748 / NBRC 13426 / NCIMB 8594 / NRRL 2338) protein is Glutamate--tRNA ligase.